A 166-amino-acid chain; its full sequence is Transcriptional repressor NrdR (166 aa).

A zinc finger spans residues 3–34; sequence CPFCRNPDSRVVDSRMADDGSSIRRRRQCPEC. The 91-residue stretch at 46-136 folds into the ATP-cone domain; sequence LSVIKRSGVG…VYQAFESLED (91 aa).

This sequence belongs to the NrdR family. Zn(2+) is required as a cofactor.

Negatively regulates transcription of bacterial ribonucleotide reductase nrd genes and operons by binding to NrdR-boxes. The chain is Transcriptional repressor NrdR from Paenarthrobacter aurescens (strain TC1).